The following is a 396-amino-acid chain: MAAVGAGGSTAAPGPGAVSAGALEPGTASAAHRRLKYISLAVLVVQNASLILSIRYARTLPGDRFFATTAVVMAEVLKGLTCLLLLFAQKRGNVKHLVLFLHEAVLVQYVDTLKLAVPSLIYTLQNNLQYVAISNLPAATFQVTYQLKILTTALFSVLMLNRSLSRLQWASLLLLFTGVAIVQAQQAGGGGPRPLDQNPGAGLAAVVASCLSSGFAGVYFEKILKGSSGSVWLRNLQLGLFGTALGLVGLWWAEGTAVATRGFFFGYTPAVWGVVLNQAFGGLLVAVVVKYADNILKGFATSLSIVLSTVASIRLFGFHVDPLFALGAGLVIGAVYLYSLPRGAAKAIASASASASGPCVHQQPPGQPPPPQLSSHRGDLITEPFLPKLLTKVKGS.

A run of 10 helical transmembrane segments spans residues A3–L23, Y37–A57, F65–L85, L97–V117, T140–L160, W169–G189, G200–F220, L238–V258, P269–V289, and L315–V335. A disordered region spans residues P358–D379. The ER retention motif motif lies at K392 to S396.

Belongs to the nucleotide-sugar transporter family. SLC35A subfamily. In terms of assembly, interacts with SLC35A3; the interaction is reduced in the presence of SLC35A4. Found in a complex with SLC35A3 and SLC35A4. As to quaternary structure, interacts with B4GALT4.

The protein localises to the endoplasmic reticulum membrane. It is found in the golgi apparatus membrane. The enzyme catalyses UMP(out) + UDP-alpha-D-galactose(in) = UMP(in) + UDP-alpha-D-galactose(out). It catalyses the reaction UDP-N-acetyl-alpha-D-galactosamine(in) + UMP(out) = UDP-N-acetyl-alpha-D-galactosamine(out) + UMP(in). It carries out the reaction UMP(out) + UDP-alpha-D-glucose(in) = UMP(in) + UDP-alpha-D-glucose(out). The catalysed reaction is UMP(out) + UDP-N-acetyl-alpha-D-glucosamine(in) = UMP(in) + UDP-N-acetyl-alpha-D-glucosamine(out). The enzyme catalyses UDP-alpha-D-galactose(in) + AMP(out) = UDP-alpha-D-galactose(out) + AMP(in). It catalyses the reaction UDP-alpha-D-galactose(in) + CMP(out) = UDP-alpha-D-galactose(out) + CMP(in). It carries out the reaction UDP-N-acetyl-alpha-D-galactosamine(out) + UDP-alpha-D-galactose(in) = UDP-N-acetyl-alpha-D-galactosamine(in) + UDP-alpha-D-galactose(out). The catalysed reaction is UDP-N-acetyl-alpha-D-glucosamine(out) + UDP-alpha-D-galactose(in) = UDP-N-acetyl-alpha-D-glucosamine(in) + UDP-alpha-D-galactose(out). The enzyme catalyses UDP-alpha-D-galactose(in) + UDP-alpha-D-glucose(out) = UDP-alpha-D-galactose(out) + UDP-alpha-D-glucose(in). It catalyses the reaction UMP(out) + CMP(in) = UMP(in) + CMP(out). It carries out the reaction UMP(out) + AMP(in) = UMP(in) + AMP(out). Transports uridine diphosphate galactose (UDP-galactose) from the cytosol into the Golgi apparatus, functioning as an antiporter that exchanges UDP-galactose for UMP. It is also able to exchange UDP-galactose for AMP and CMP, and to transport UDP-N-acetylgalactosamine (UDP-GalNAc) and other nucleotide sugars. As a provider of UDP-galactose to galactosyltransferases present in the Golgi apparatus, it is necessary for globotriaosylceramide/globoside (Gb3Cer) synthesis from lactosylceramide. The sequence is that of UDP-galactose translocator from Homo sapiens (Human).